The chain runs to 271 residues: Zinc finger protein 501 (271 aa).

C2H2-type zinc fingers lie at residues 22-44 (SKCSECGKFFTQRSSLTQHQRIH), 50-72 (YVCSECGSCFRKQSNLTQHLRIH), 78-100 (YKCNECEKAFQTKAILVQHLRIH), 106-128 (YKCNECGKAFCQSPSLIKHQRIH), 134-156 (YKCTECGKAFSQSICLTRHQRSH), 162-184 (FKCNECGKAFNQSACLMQHQRIH), 190-212 (YTCTECGKAFTQNSSLVEHERTH), 218-240 (YKCSECEKTFRKQAHLSEHYRIH), and 246-268 (YECVGCGKSFRHSSALLRHQRLH).

It belongs to the krueppel C2H2-type zinc-finger protein family.

It is found in the nucleus. Its subcellular location is the nucleolus. Functionally, may be involved in transcriptional regulation. Essential for Golgi structural integrity. The chain is Zinc finger protein 501 (ZNF501) from Homo sapiens (Human).